Here is a 123-residue protein sequence, read N- to C-terminus: Small ribosomal subunit protein uS12 (123 aa).

Asp-89 bears the 3-methylthioaspartic acid mark.

It belongs to the universal ribosomal protein uS12 family. Part of the 30S ribosomal subunit. Contacts proteins S8 and S17. May interact with IF1 in the 30S initiation complex.

With S4 and S5 plays an important role in translational accuracy. Functionally, interacts with and stabilizes bases of the 16S rRNA that are involved in tRNA selection in the A site and with the mRNA backbone. Located at the interface of the 30S and 50S subunits, it traverses the body of the 30S subunit contacting proteins on the other side and probably holding the rRNA structure together. The combined cluster of proteins S8, S12 and S17 appears to hold together the shoulder and platform of the 30S subunit. This Rhizobium meliloti (strain 1021) (Ensifer meliloti) protein is Small ribosomal subunit protein uS12.